The primary structure comprises 345 residues: 3-dehydroquinate synthase (345 aa).

NAD(+) is bound by residues 86 to 90, 110 to 111, Lys-123, and Lys-132; these read GALLD and TT. 3 residues coordinate Zn(2+): Glu-165, His-229, and His-243.

This sequence belongs to the sugar phosphate cyclases superfamily. Dehydroquinate synthase family. NAD(+) is required as a cofactor. Requires Co(2+) as cofactor. The cofactor is Zn(2+).

Its subcellular location is the cytoplasm. The catalysed reaction is 7-phospho-2-dehydro-3-deoxy-D-arabino-heptonate = 3-dehydroquinate + phosphate. It participates in metabolic intermediate biosynthesis; chorismate biosynthesis; chorismate from D-erythrose 4-phosphate and phosphoenolpyruvate: step 2/7. Functionally, catalyzes the conversion of 3-deoxy-D-arabino-heptulosonate 7-phosphate (DAHP) to dehydroquinate (DHQ). The chain is 3-dehydroquinate synthase from Pyrobaculum aerophilum (strain ATCC 51768 / DSM 7523 / JCM 9630 / CIP 104966 / NBRC 100827 / IM2).